The following is a 382-amino-acid chain: MVDNRPLTIALVAGETSGDILGAGLIRALKAREPNARFVGVAGPLMQAEGCEAWYEMEELAVMGIVEVLGRLRRLLHIRADLTGRFTDLKPDVFVGIDAPDFNITLEGNLKKQGIKTIHYVSPSVWAWRQKRVFKIGRSTDMVLAFLPFEKAFYDRFNVPCRFIGHTMADAMPLDPDKNAARDSLGIPHDAHCLALLPGSRGAEVEMLSADFLRTAQILRQTYPDLEVVVPLVNAKRREQFERIKAAVAPDLHIHLLDGKGREAMVASDAALLASGTAALECMLAKCPMVVGYRMKPFTFWLAKRLVKTDYVSLPNLLAGRELVKELLQDECQPQALADALLPLLADGKTRHQMHDTFRELHQQIRCNADEQAADAVMELAQ.

The protein belongs to the LpxB family.

The enzyme catalyses 2-N,3-O-bis[(3R)-3-hydroxytetradecanoyl]-alpha-D-glucosaminyl 1-phosphate + UDP-2-N,3-O-bis[(3R)-3-hydroxytetradecanoyl]-alpha-D-glucosamine = lipid A disaccharide (E. coli) + UDP + H(+). The catalysed reaction is a lipid X + a UDP-2-N,3-O-bis[(3R)-3-hydroxyacyl]-alpha-D-glucosamine = a lipid A disaccharide + UDP + H(+). It participates in glycolipid biosynthesis; lipid IV(A) biosynthesis; lipid IV(A) from (3R)-3-hydroxytetradecanoyl-[acyl-carrier-protein] and UDP-N-acetyl-alpha-D-glucosamine: step 5/6. Condensation of UDP-2,3-diacylglucosamine and 2,3-diacylglucosamine-1-phosphate to form lipid A disaccharide, a precursor of lipid A, a phosphorylated glycolipid that anchors the lipopolysaccharide to the outer membrane of the cell. This chain is Lipid-A-disaccharide synthase, found in Enterobacter sp. (strain 638).